A 555-amino-acid polypeptide reads, in one-letter code: Sesquiterpene synthase 31 (555 aa).

Residues aspartate 308, aspartate 312, aspartate 451, threonine 455, and glutamate 459 each contribute to the Mg(2+) site. Positions aspartate 308–aspartate 312 match the DDXXD motif motif.

This sequence belongs to the terpene synthase family. Tpsa subfamily. The cofactor is Mg(2+). It depends on Mn(2+) as a cofactor. Expressed in stem and leaf trichomes. Detected in roots, fruits and flowers.

The protein resides in the cytoplasm. It catalyses the reaction (2E,6E)-farnesyl diphosphate = viridiflorene + diphosphate. The protein operates within secondary metabolite biosynthesis; terpenoid biosynthesis. In terms of biological role, sesquiterpene synthase involved in the production of viridiflorene from (E,E)-farnesyl diphosphate (FPP). Has no activity with (Z,Z)-FPP. Can act with a low efficiency as a monoterpene synthase with geranyl diphosphate as substrate. This is Sesquiterpene synthase 31 from Solanum lycopersicum (Tomato).